The following is a 212-amino-acid chain: Leucyl/phenylalanyl-tRNA--protein transferase (212 aa).

This sequence belongs to the L/F-transferase family.

The protein resides in the cytoplasm. It carries out the reaction N-terminal L-lysyl-[protein] + L-leucyl-tRNA(Leu) = N-terminal L-leucyl-L-lysyl-[protein] + tRNA(Leu) + H(+). It catalyses the reaction N-terminal L-arginyl-[protein] + L-leucyl-tRNA(Leu) = N-terminal L-leucyl-L-arginyl-[protein] + tRNA(Leu) + H(+). The enzyme catalyses L-phenylalanyl-tRNA(Phe) + an N-terminal L-alpha-aminoacyl-[protein] = an N-terminal L-phenylalanyl-L-alpha-aminoacyl-[protein] + tRNA(Phe). In terms of biological role, functions in the N-end rule pathway of protein degradation where it conjugates Leu, Phe and, less efficiently, Met from aminoacyl-tRNAs to the N-termini of proteins containing an N-terminal arginine or lysine. The sequence is that of Leucyl/phenylalanyl-tRNA--protein transferase from Paracoccus denitrificans (strain Pd 1222).